Reading from the N-terminus, the 621-residue chain is Chaperone protein HtpG (621 aa).

The interval 1 to 328 (MKQEKKKFDA…SEDLPLNISR (328 aa)) is a; substrate-binding. Residues 329 to 544 (ESLQHNNVLE…EAAMDIRMER (216 aa)) are b. A disordered region spans residues 479–498 (VDQATSSSEEKNKDDKKSDD). Residues 486 to 498 (SEEKNKDDKKSDD) show a composition bias toward basic and acidic residues. A c region spans residues 545 to 621 (FLIEQKQIAN…LNDIVQKAIL (77 aa)).

The protein belongs to the heat shock protein 90 family. Homodimer.

The protein localises to the cytoplasm. Molecular chaperone. Has ATPase activity. The chain is Chaperone protein HtpG from Rickettsia bellii (strain OSU 85-389).